Here is a 210-residue protein sequence, read N- to C-terminus: Thymidylate kinase (210 aa).

10–17 (GLEGAGKS) serves as a coordination point for ATP.

This sequence belongs to the thymidylate kinase family.

The catalysed reaction is dTMP + ATP = dTDP + ADP. In terms of biological role, phosphorylation of dTMP to form dTDP in both de novo and salvage pathways of dTTP synthesis. The chain is Thymidylate kinase from Hamiltonella defensa subsp. Acyrthosiphon pisum (strain 5AT).